Consider the following 134-residue polypeptide: Interleukin-5 (134 aa).

The first 19 residues, 1–19 (MRMLLHLSLLALGAAYVYA), serve as a signal peptide directing secretion. The O-linked (GalNAc...) threonine glycan is linked to Thr22. A glycan (N-linked (GlcNAc...) asparagine) is linked at Asn47.

The protein belongs to the IL-5 family. Homodimer; disulfide-linked. Interacts with IL5RA. Interacts with CSF2RB. In terms of tissue distribution, present in peripheral blood mononuclear cells.

Its subcellular location is the secreted. Homodimeric cytokine expressed predominantly by T-lymphocytes and NK cells that plays an important role in the survival, differentiation, and chemotaxis of eosinophils. Also acts on activated and resting B-cells to induce immunoglobulin production, growth, and differentiation. Mechanistically, exerts its biological effects through a receptor composed of IL5RA subunit and the cytokine receptor common subunit beta/CSF2RB. Binding to the receptor leads to activation of various kinases including LYN, SYK and JAK2 and thereby propagates signals through the RAS-MAPK and JAK-STAT5 pathways respectively. The protein is Interleukin-5 (IL5) of Homo sapiens (Human).